The following is a 223-amino-acid chain: MADSEQQEDYKIQGFDADTQSLLKTALKEPGSVDLEKAASVIVDQSLRDATFSREAGRMCYTIIQAESKQTGRTVFRSTLLNRLQVEYKNRKETRARSLQEWVCYVGFMCNVFDYLRVNNMPMLALVNPVYDCLFDLVQPDNLKREEEVDCLVLQLHRVGEQLEKMNCQRMDELFSQLRDSFLLQGGLSSLTQLLLLEMIEYRAAGWRMTDAAQKYYYSEVSE.

Positions 9–206 (DYKIQGFDAD…LEMIEYRAAG (198 aa)) constitute an MIF4G domain.

The protein belongs to the MIF4GD family. In terms of assembly, interacts with eif4g1, eif4g2 and slbp; probably tethered by SLBP to the 3'-end of mRNAs ending with the histone stem-loop, it also interacts with eif4g1 which is bound to their 5'-end.

It localises to the cytoplasm. The protein resides in the nucleus. Its function is as follows. Functions in replication-dependent translation of histone mRNAs which differ from other eukaryotic mRNAs in that they do not end with a poly-A tail but a stem-loop. May participate in circularizing those mRNAs specifically enhancing their translation. The polypeptide is MIF4G domain-containing protein (mif4gd) (Xenopus tropicalis (Western clawed frog)).